A 114-amino-acid chain; its full sequence is Gamma-glutamylcyclotransferase family protein ytfP (114 aa).

This sequence belongs to the gamma-glutamylcyclotransferase family.

Its subcellular location is the cytoplasm. May play a role in antibiotic biosynthesis. This chain is Gamma-glutamylcyclotransferase family protein ytfP (ytfP), found in Citrobacter rodentium (strain ICC168) (Citrobacter freundii biotype 4280).